The primary structure comprises 298 residues: 5'-AMP-activated protein kinase subunit beta (298 aa).

A disordered region spans residues 1–98 (MGNVQSQEGE…KTHQPYSGPC (98 aa)). Residues 19–30 (QDATTTPDNANN) are compositionally biased toward polar residues. Residues 48 to 59 (LNQEGEMSDDNQ) show a composition bias toward acidic residues. The segment covering 60 to 77 (QEGGNNRTSQNGTSGSSG) has biased composition (polar residues). Residues 78–91 (HTKRRSQTSGKKTH) show a composition bias toward basic residues. 250-252 (DQS) lines the ADP pocket.

This sequence belongs to the 5'-AMP-activated protein kinase beta subunit family. AMPK is a heterotrimer of an alpha catalytic subunit (ssp2), a beta (amk2) and a gamma non-catalytic subunits (cbs2). The beta subunit serves as a bridge between the catalytic and the regulatory subunit.

It localises to the cytoplasm. Functionally, beta subunit of AMP-activated protein kinase (AMPK), which is required for transcriptional, metabolic, and developmental adaptations in response to glucose limitation. Has a structural role, mediating heterotrimer formation, and a regulatory role, defining carbon source-regulated subcellular location and substrate specificity of the AMPK kinase complex. The chain is 5'-AMP-activated protein kinase subunit beta (amk2) from Schizosaccharomyces pombe (strain 972 / ATCC 24843) (Fission yeast).